The following is a 284-amino-acid chain: Protease HtpX homolog (284 aa).

Transmembrane regions (helical) follow at residues 7–26 (TYLLMALLVGLIYAICMMLH) and 33–47 (IILALIPNVIAYYMS). His129 serves as a coordination point for Zn(2+). Residue Glu130 is part of the active site. Zn(2+) is bound at residue His133. Transmembrane regions (helical) follow at residues 148 to 168 (LAGAIVMIAEWMLYWGGIFFV) and 180 to 200 (IGTILLLILAPIAATIIQFAI). Glu205 serves as a coordination point for Zn(2+).

This sequence belongs to the peptidase M48B family. It depends on Zn(2+) as a cofactor.

The protein localises to the cell membrane. The sequence is that of Protease HtpX homolog from Methanocaldococcus jannaschii (strain ATCC 43067 / DSM 2661 / JAL-1 / JCM 10045 / NBRC 100440) (Methanococcus jannaschii).